The chain runs to 102 residues: Serum amyloid A-5 protein (102 aa).

The disordered stretch occupies residues 68–102 (GRGHEDSMADQEANRWGRSGNDPNHYRPAGLPDKY). The segment covering 69 to 82 (RGHEDSMADQEANR) has biased composition (basic and acidic residues).

Belongs to the SAA family. Expressed by the liver; secreted in plasma.

It localises to the secreted. In terms of biological role, major acute phase reactant. Apolipoprotein of the HDL complex. The polypeptide is Serum amyloid A-5 protein (Mesocricetus auratus (Golden hamster)).